The primary structure comprises 298 residues: Phosphatidylglycerol--prolipoprotein diacylglyceryl transferase (298 aa).

Helical transmembrane passes span 17 to 37, 59 to 79, and 97 to 117; these read LAVR…IVVG, MMFY…VLFY, and GGMS…LFAW. Arg-142 contacts a 1,2-diacyl-sn-glycero-3-phospho-(1'-sn-glycerol). 2 helical membrane passes run 230–250 and 257–277; these read MGAI…TVEF and FLGL…PMIV.

This sequence belongs to the Lgt family.

The protein resides in the cell inner membrane. The enzyme catalyses L-cysteinyl-[prolipoprotein] + a 1,2-diacyl-sn-glycero-3-phospho-(1'-sn-glycerol) = an S-1,2-diacyl-sn-glyceryl-L-cysteinyl-[prolipoprotein] + sn-glycerol 1-phosphate + H(+). It functions in the pathway protein modification; lipoprotein biosynthesis (diacylglyceryl transfer). Its function is as follows. Catalyzes the transfer of the diacylglyceryl group from phosphatidylglycerol to the sulfhydryl group of the N-terminal cysteine of a prolipoprotein, the first step in the formation of mature lipoproteins. This chain is Phosphatidylglycerol--prolipoprotein diacylglyceryl transferase, found in Burkholderia cenocepacia (strain ATCC BAA-245 / DSM 16553 / LMG 16656 / NCTC 13227 / J2315 / CF5610) (Burkholderia cepacia (strain J2315)).